Reading from the N-terminus, the 288-residue chain is Thiamine-monophosphate kinase (288 aa).

3 residues coordinate Mg(2+): Asp20, Thr30, and Asp32. Position 39 (Asp39) interacts with substrate. Positions 60 and 107 each coordinate Mg(2+). ATP-binding positions include 106 to 107 (GD) and Arg130. Asp188 provides a ligand contact to Mg(2+). Ser190 provides a ligand contact to ATP. Asp191 is a Mg(2+) binding site. Trp286 is a binding site for substrate.

This sequence belongs to the thiamine-monophosphate kinase family.

It catalyses the reaction thiamine phosphate + ATP = thiamine diphosphate + ADP. The protein operates within cofactor biosynthesis; thiamine diphosphate biosynthesis; thiamine diphosphate from thiamine phosphate: step 1/1. In terms of biological role, catalyzes the ATP-dependent phosphorylation of thiamine-monophosphate (TMP) to form thiamine-pyrophosphate (TPP), the active form of vitamin B1. The protein is Thiamine-monophosphate kinase of Halobacterium salinarum (strain ATCC 700922 / JCM 11081 / NRC-1) (Halobacterium halobium).